We begin with the raw amino-acid sequence, 487 residues long: Diacylglycerol kinase 4 (487 aa).

A DAGKc domain is found at 86-242; that stretch reads TPEVPLMVFV…LDSWNILITM (157 aa).

This sequence belongs to the eukaryotic diacylglycerol kinase family. As to quaternary structure, monomer. As to expression, highly expressed in pollen grains. Expressed in roots, hypocotyls, leaf vasculature, developing anthers and stigmas, and receptacles of siliques.

The protein localises to the endoplasmic reticulum. It is found in the cytoplasm. It localises to the cytosol. The catalysed reaction is a 1,2-diacyl-sn-glycerol + ATP = a 1,2-diacyl-sn-glycero-3-phosphate + ADP + H(+). Phosphorylates the second messenger diacylglycerol (DAG) to generate phosphatidic acid (PA), another important signaling molecule. PA is required for plant development and responses to abiotic stress and pathogen attack. May be involved in the accumulation of PA during cold stress. Involved in the regulation of PA and phosphatidylcholine biosynthesis in growing pollen tubes. Required for nitric oxide-dependent pollen tube growth and re-orientation responses. Functions together with DGK2 in male gametophyte development and biosynthesis of phosphatidylglycerol and phosphatidylinositol in the endoplasmic reticulum (ER). Involved in PA production for pollen grain growth, as well as leaf and root growth. Possesses guanylyl cyclase activity in vitro. This chain is Diacylglycerol kinase 4, found in Arabidopsis thaliana (Mouse-ear cress).